The sequence spans 452 residues: Heat shock protein 83 (452 aa).

Arg-124 contributes to the ATP binding site. A TPR repeat-binding motif is present at residues 448–452 (MEQVD).

Belongs to the heat shock protein 90 family. In terms of assembly, homodimer.

The protein resides in the cytoplasm. In terms of biological role, molecular chaperone that promotes the maturation, structural maintenance and proper regulation of specific target proteins involved for instance in cell cycle control and signal transduction. Undergoes a functional cycle that is linked to its ATPase activity. This cycle probably induces conformational changes in the client proteins, thereby causing their activation. Interacts dynamically with various co-chaperones that modulate its substrate recognition, ATPase cycle and chaperone function. The protein is Heat shock protein 83 (HSP83) of Leishmania donovani.